The primary structure comprises 1150 residues: ATP-dependent DNA helicase Q-like 4B (1150 aa).

Disordered regions lie at residues 124 to 143 (TPAIDNDSTSRTSSTKGSTF) and 154 to 179 (CAHNHPEHSQRSVRGTAKSIDSFSSS). Over residues 132-142 (TSRTSSTKGST) the composition is skewed to low complexity. Residues 327–361 (DHVEQLHQKRLLLKKQIQQLEILIHNKERKKSQCL) are a coiled coil. The segment covering 416–428 (YDISSGSEEREQS) has biased composition (basic and acidic residues). A disordered region spans residues 416 to 446 (YDISSGSEEREQSVSEVIDVTDTESSNDKKW). A Helicase ATP-binding domain is found at 478-653 (INATMSGCDV…VQALGLVNCV (176 aa)). 491-498 (MPTGGGKS) contributes to the ATP binding site. A DEAH box motif is present at residues 597-600 (DEAH). The Helicase C-terminal domain occupies 678–823 (DIDKFIRENH…QMKMGYNCKA (146 aa)). In terms of domain architecture, HRDC spans 1029-1111 (SNLSGILLTA…DSTINDHYKT (83 aa)). The tract at residues 1106 to 1150 (NDHYKTRPGSGKRRRDENVNPNVAEDDDPDWSASQSHKKVVKNKK) is disordered. Residues 1141 to 1150 (SHKKVVKNKK) are compositionally biased toward basic residues.

Belongs to the helicase family. RecQ subfamily. Mg(2+) serves as cofactor. Mn(2+) is required as a cofactor. As to expression, mostly expressed in roots, seedlings, shoots, shoot apical mersitem, flowers, and siliques.

The protein resides in the nucleus. It catalyses the reaction Couples ATP hydrolysis with the unwinding of duplex DNA by translocating in the 3'-5' direction.. It carries out the reaction ATP + H2O = ADP + phosphate + H(+). 3'-5' DNA helicase that may play a role in the repair of DNA. Required to promote but not to suppress crossovers. The polypeptide is ATP-dependent DNA helicase Q-like 4B (RECQL4B) (Arabidopsis thaliana (Mouse-ear cress)).